Reading from the N-terminus, the 417-residue chain is MIDNILFDLIEREAKRERENIELIASENFVSSDVRQAVGSVLTNKYAEGYPSKRYYGGCSVVDDIENLAISRAMELFGASYANVQPHSGSQANMAAIMSLIKPGDKILGMELSHGGHLTHGSKVSFSGMFFDAYSYGVSRDSEMIDYDDVRNIAKACRPNLIIAGASSYSREIDFKKFREIANEVSAYLLCDIAHTAGLVATGFHNSPIDVAHLTTSTTHKTLRGPRGGLILAGKEFNTMINYNNKERTLDLAVNSCVFPGTQGGPLMHVIAGKAVAFKEALNKEFKDYISRVIENTKAMAEYFISEGLRIVSGGTDNHLFLVDLSGLGITGADAEKILESVNITLNKNAIPFDSKNPSVASGIRIGAPAITSRGLNRDDSIKVAHFIIRALKTKSTDELRKIKQEVIGFISSFDMP.

(6S)-5,6,7,8-tetrahydrofolate contacts are provided by residues Leu-112 and 116–118; that span reads GHL. N6-(pyridoxal phosphate)lysine is present on Lys-221. Glu-247 contacts (6S)-5,6,7,8-tetrahydrofolate.

The protein belongs to the SHMT family. Homodimer. Pyridoxal 5'-phosphate serves as cofactor.

The protein localises to the cytoplasm. It carries out the reaction (6R)-5,10-methylene-5,6,7,8-tetrahydrofolate + glycine + H2O = (6S)-5,6,7,8-tetrahydrofolate + L-serine. Its pathway is one-carbon metabolism; tetrahydrofolate interconversion. It participates in amino-acid biosynthesis; glycine biosynthesis; glycine from L-serine: step 1/1. Functionally, catalyzes the reversible interconversion of serine and glycine with tetrahydrofolate (THF) serving as the one-carbon carrier. This reaction serves as the major source of one-carbon groups required for the biosynthesis of purines, thymidylate, methionine, and other important biomolecules. Also exhibits THF-independent aldolase activity toward beta-hydroxyamino acids, producing glycine and aldehydes, via a retro-aldol mechanism. This chain is Serine hydroxymethyltransferase, found in Borrelia recurrentis (strain A1).